The following is a 410-amino-acid chain: MISVSDKNEVKRIIHTEDWPKSELIYGNFRQNPARPTLIAFTDKKAYAERKRLISGWFGLRYIRSLQPLMQQCINESIASIERAIDTAGGIVDMQNLCTGTAVDIIGTTIFGQSFDVVKNGSHPLPDYLRKMLKASGLLLFMPWIRSIPFRPTRPAYIDRFTLDIMEKRRATAKSAPRQDLLQKLVEQLDDAAGSKFTPFDVQGEVTIMLVAGTETTANSELFTLLMLVRHPDKLRRVYAEVDAWYPPGDLATPVDCEYSLQGMTYLQACEDEAMRLVPAQATGSPRESRRDEVVLGYRVPAGTTVFPTTQGVHHDESVWKDASEYVPERWLEIYEKGKVTEQHFWPFSAGSRVCIGKHFALQEMHLMLVNLLRRFEFEYVPGQPETTVFRVAQHMEAPKYVMKVRRRKF.

C355 serves as a coordination point for heme.

The protein belongs to the cytochrome P450 family. Requires heme as cofactor.

It functions in the pathway secondary metabolite biosynthesis. Functionally, cytochrome P450 monooxygenase; part of the gene cluster that mediates the biosynthesis of macrophasetins, 3-decalinoyltetramic acids (DTAs) which feature a tetramate (pyrrolidine-2,4-dione) unit connected to a decalin fragment and that have potent bioactivities. The PKS-NRPS mpsA together with its associated enoylreductase partner mpsG incorporate one unit of acetyl-CoA, seven units of malonyl-CoA, and one unit of L-alanine to assemble the linear tetramic acid intermediate corresponding to the backbone of macrophasetins. Without the Diels-Alderase mpsD, the mpsA/G product can undergo the non-enzymatic intramolecular Diels-Alder (IMDA) reaction to generate both macrophasetin A and macrophasetin B. Catalyzed by mpsD, the linear tetramic acid intermediate is thoroughly converted to macrophasetin A via the endo-IMDA reaction in a regioselective and stereoselective manner. Finally, the cytochrome P450 monooxygenase mpsF catalyzes the hydroxylation at C20 to yield the end product macrophasetin C. This is Cytochrome P450 monooxygenase mpsF from Macrophomina phaseolina (strain MS6) (Charcoal rot fungus).